Reading from the N-terminus, the 599-residue chain is MARSNRRGGRGDPEDDPAWAPPGHRCAGERAVGGPTVIPRAYLPAVPAGGNESRAFQGRFVDPWFSGIRTGYVIWDGGRLLGVTRNEPEHADVIDVDGIICPGFVDAHVHVESSGLRPARYAEIVVREGTTAVVWDPHEVVNVSGELGLEWAVKTAEEALPFKFYIALPSCVPALGPPYETVEGEITVDVARKFASHPMVVSVGELMDVAGVMEGEKDEFIELKSLYGLTVDGHAPGLTGFEAMRYFAAGPETDHECSTAEEFTSRRELGVWTFVRQGSSSKDMEVALETLEDLRGVCFVTDDLHVKDMDEISLRKIVGRAIEAGFDPLESLSAVTLNPSLCYGLQSGRLVPGFHADIVVVEDLDENMELTDVWIGGKRSERVRFRDAEAELPDVELSVDPREVSFQDGKYEVRCVGLVRGSIRTEEIVREITVKDGAVKDDDVAFLVVTDRYGQGSWSIGFVEGFEELDCAVVSTVAHDSHNVVVAGRRLDDVRRALQLVSEVGGCVGAVAGDRAEFVRLDVAGLMSSSDPEEVKKSYEDVLELIRSSSGVDWDPFQALSFVTLPVVPELRLTDRGLVKVEPDEIRFVDIITDGDPVE.

The segment at 1 to 31 (MARSNRRGGRGDPEDDPAWAPPGHRCAGERA) is disordered.

It belongs to the metallo-dependent hydrolases superfamily. Adenine deaminase family. The cofactor is Mn(2+).

The catalysed reaction is adenine + H2O + H(+) = hypoxanthine + NH4(+). In Methanopyrus kandleri (strain AV19 / DSM 6324 / JCM 9639 / NBRC 100938), this protein is Adenine deaminase.